Reading from the N-terminus, the 265-residue chain is Glutamate racemase (265 aa).

Substrate is bound by residues 13–14 (DS) and 45–46 (YG). Cys77 functions as the Proton donor/acceptor in the catalytic mechanism. A substrate-binding site is contributed by 78–79 (NT). Cys185 (proton donor/acceptor) is an active-site residue. Position 186–187 (186–187 (TH)) interacts with substrate.

This sequence belongs to the aspartate/glutamate racemases family.

The enzyme catalyses L-glutamate = D-glutamate. It functions in the pathway cell wall biogenesis; peptidoglycan biosynthesis. In terms of biological role, provides the (R)-glutamate required for cell wall biosynthesis. The protein is Glutamate racemase of Vibrio cholerae serotype O1 (strain ATCC 39315 / El Tor Inaba N16961).